Consider the following 325-residue polypeptide: Isoaspartyl peptidase/L-asparaginase (325 aa).

Threonine 193 serves as the catalytic Nucleophile. Substrate is bound by residues 221 to 224 and 243 to 246; these read RIGD and TGKG.

It belongs to the Ntn-hydrolase family. Heterotetramer of two alpha and two beta chains arranged as a dimer of alpha/beta heterodimers. Cleaved into an alpha and beta chain by autocatalysis; this activates the enzyme. The N-terminal residue of the beta subunit is responsible for the nucleophile hydrolase activity. In terms of tissue distribution, expressed in ripening seeds and developing nodules.

The enzyme catalyses Cleavage of a beta-linked Asp residue from the N-terminus of a polypeptide.. Degrades proteins damaged by L-isoaspartyl residue formation (also known as beta-Asp residues). Also has L-asparaginase activity, which is used to liberate stored nitrogen during seed development. The chain is Isoaspartyl peptidase/L-asparaginase from Lupinus luteus (European yellow lupine).